The following is an 83-amino-acid chain: RNA-binding protein Hfq (83 aa).

One can recognise a Sm domain in the interval 10–69; the sequence is DPFLNALRREHVPVSIYLVNGIKLQGQIESFDQYVVLLRNTVTQMVYKHAISTIVPGRAV.

This sequence belongs to the Hfq family. As to quaternary structure, homohexamer.

RNA chaperone that binds small regulatory RNA (sRNAs) and mRNAs to facilitate mRNA translational regulation in response to envelope stress, environmental stress and changes in metabolite concentrations. Also binds with high specificity to tRNAs. The protein is RNA-binding protein Hfq of Acidovorax ebreus (strain TPSY) (Diaphorobacter sp. (strain TPSY)).